The chain runs to 757 residues: Catalase-peroxidase 2 (757 aa).

Residues 1 to 26 (MKHPLFNQKVLAGFVSMLLISGSAFA) form the signal peptide. Positions 126–248 (WHSAGTYRTL…LGATHMGLIY (123 aa)) form a cross-link, tryptophyl-tyrosyl-methioninium (Trp-Tyr) (with M-274). The Proton acceptor role is filled by His127. The tryptophyl-tyrosyl-methioninium (Tyr-Met) (with W-126) cross-link spans 248-274 (YVNPEGPKGVPDPLGSAKNIRVAFERM). His289 contributes to the heme b binding site.

It belongs to the peroxidase family. Peroxidase/catalase subfamily. Homodimer or homotetramer. Heme b is required as a cofactor. Post-translationally, formation of the three residue Trp-Tyr-Met cross-link is important for the catalase, but not the peroxidase activity of the enzyme.

It catalyses the reaction H2O2 + AH2 = A + 2 H2O. The catalysed reaction is 2 H2O2 = O2 + 2 H2O. In terms of biological role, bifunctional enzyme with both catalase and broad-spectrum peroxidase activity. The chain is Catalase-peroxidase 2 from Shewanella frigidimarina (strain NCIMB 400).